Consider the following 122-residue polypeptide: MIQPQTHLNVADNSGARELMCIRIIGASNRRYAHIGDVIVAVIKEAVPNMPLQRSEVIRAVIVRTCKELKRDNGMIIRYDDNAAVVIDQEGNPKGTRVFGAIARELRQLNFTKIVSLAPEVL.

It belongs to the universal ribosomal protein uL14 family. As to quaternary structure, part of the 50S ribosomal subunit.

The protein localises to the plastid. The protein resides in the chloroplast. In terms of biological role, binds to 23S rRNA. The protein is Large ribosomal subunit protein uL14c of Drimys granadensis.